The primary structure comprises 431 residues: NADH-quinone oxidoreductase subunit F (431 aa).

Residue 54–63 (GRGGAGFPTG) participates in NAD(+) binding. 167 to 214 (GAGAYICGEETALLESLEGKKGMPRMKPPFPAGSGLYGCPTTVNNVES) is an FMN binding site. 4 residues coordinate [4Fe-4S] cluster: Cys-346, Cys-349, Cys-352, and Cys-392.

Belongs to the complex I 51 kDa subunit family. The cofactor is FMN. Requires [4Fe-4S] cluster as cofactor.

It catalyses the reaction a quinone + NADH + 5 H(+)(in) = a quinol + NAD(+) + 4 H(+)(out). Its function is as follows. NDH-1 shuttles electrons from NADH, via FMN and iron-sulfur (Fe-S) centers, to quinones in the respiratory chain. The immediate electron acceptor for the enzyme in this species is believed to be ubiquinone. Couples the redox reaction to proton translocation (for every two electrons transferred, four hydrogen ions are translocated across the cytoplasmic membrane), and thus conserves the redox energy in a proton gradient. In Rhodobacter capsulatus (Rhodopseudomonas capsulata), this protein is NADH-quinone oxidoreductase subunit F (nuoF).